We begin with the raw amino-acid sequence, 244 residues long: Adenosylcobinamide-GDP ribazoletransferase (244 aa).

5 helical membrane-spanning segments follow: residues leucine 31–leucine 51, alanine 55–leucine 75, isoleucine 109–valine 129, glycine 134–glycine 154, and valine 188–tryptophan 208.

The protein belongs to the CobS family. It depends on Mg(2+) as a cofactor.

It localises to the cell inner membrane. The enzyme catalyses alpha-ribazole + adenosylcob(III)inamide-GDP = adenosylcob(III)alamin + GMP + H(+). The catalysed reaction is alpha-ribazole 5'-phosphate + adenosylcob(III)inamide-GDP = adenosylcob(III)alamin 5'-phosphate + GMP + H(+). The protein operates within cofactor biosynthesis; adenosylcobalamin biosynthesis; adenosylcobalamin from cob(II)yrinate a,c-diamide: step 7/7. Joins adenosylcobinamide-GDP and alpha-ribazole to generate adenosylcobalamin (Ado-cobalamin). Also synthesizes adenosylcobalamin 5'-phosphate from adenosylcobinamide-GDP and alpha-ribazole 5'-phosphate. The sequence is that of Adenosylcobinamide-GDP ribazoletransferase from Pseudomonas entomophila (strain L48).